The chain runs to 696 residues: ATP-dependent zinc metalloprotease FtsH (696 aa).

Over 1–29 (MWLQVTNCSTLHSSLSYCGANTLSDMAKN) the chain is Cytoplasmic. Residues 30–50 (LILWLVIAVVLMSVFQSFGPS) traverse the membrane as a helical segment. The Periplasmic segment spans residues 51 to 124 (DSAGRQVDYT…LGTPPEEPSL (74 aa)). Residues 125–145 (LASIFISWFPMLLLIGVWVFF) form a helical membrane-spanning segment. Residues 146 to 696 (MRQMQGGGGG…APKEDDKPQA (551 aa)) lie on the Cytoplasmic side of the membrane. ATP is bound at residue 219–226 (GPPGTGKT). Zn(2+) is bound at residue histidine 441. Glutamate 442 is a catalytic residue. Histidine 445 and aspartate 519 together coordinate Zn(2+). The segment at 627–696 (RAPKGWGDTD…APKEDDKPQA (70 aa)) is disordered. Positions 650 to 696 (PEAKTESAPEAKAEANVETEEKPVAADSEELKPKAEQAPKEDDKPQA) are enriched in basic and acidic residues.

The protein in the central section; belongs to the AAA ATPase family. It in the C-terminal section; belongs to the peptidase M41 family. In terms of assembly, homohexamer. Requires Zn(2+) as cofactor.

Its subcellular location is the cell inner membrane. Acts as a processive, ATP-dependent zinc metallopeptidase for both cytoplasmic and membrane proteins. Plays a role in the quality control of integral membrane proteins. This Photobacterium profundum (strain SS9) protein is ATP-dependent zinc metalloprotease FtsH.